Reading from the N-terminus, the 761-residue chain is Spindle assembly abnormal protein 4 (761 aa).

Positions 1 to 11 (MLPSENGDEDQ) are enriched in acidic residues. Residues 1–109 (MLPSENGDED…SNERREEDNV (109 aa)) are disordered. Residues 51-62 (TPTNSAPSSART) are compositionally biased toward polar residues. The span at 90–106 (ESHDSGNRSESNERREE) shows a compositional bias: basic and acidic residues. A coiled-coil region spans residues 129 to 156 (ETCSKVSEEATQLRAEADRITAQANFIN). The span at 164-173 (TPSSYSSNIS) shows a compositional bias: low complexity. Disordered stretches follow at residues 164–228 (TPSS…QARP) and 252–280 (PRRQPMLPAHHHPSQKENVPERKAPSEHV). Residues 210 to 223 (QTLSSLASSGSLDT) are compositionally biased toward polar residues. Over residues 265 to 280 (SQKENVPERKAPSEHV) the composition is skewed to basic and acidic residues. A coiled-coil region spans residues 326-464 (RKKQEEAYAK…EKDDREKEMF (139 aa)). The segment covering 479–497 (ATGSAASSRLPSVSSLASS) has biased composition (low complexity). Residues 479 to 510 (ATGSAASSRLPSVSSLASSMKTGSTGKGRTVS) form a disordered region.

It localises to the cytoplasm. Its subcellular location is the cytoskeleton. It is found in the microtubule organizing center. The protein resides in the centrosome. In terms of biological role, required for centrosome duplication. Plays a central role in determining centrosome size. The protein is Spindle assembly abnormal protein 4 (sas-4) of Caenorhabditis briggsae.